We begin with the raw amino-acid sequence, 142 residues long: Required for drug-induced death protein 1 (142 aa).

2 disordered regions span residues 1 to 32 and 46 to 66; these read MTVG…DEEA and EAAA…TRGA. A helical membrane pass occupies residues 116–138; it reads VVIGLQGFAAAYSAPFAVATSVV.

Its subcellular location is the membrane. Functionally, regulates drug efflux through modulation of ABCB1 localization and activity. The protein is Required for drug-induced death protein 1 of Homo sapiens (Human).